A 931-amino-acid polypeptide reads, in one-letter code: Phosphoenolpyruvate carboxylase (931 aa).

Residues His138 and Lys594 contribute to the active site.

Belongs to the PEPCase type 1 family. Mg(2+) is required as a cofactor.

The enzyme catalyses oxaloacetate + phosphate = phosphoenolpyruvate + hydrogencarbonate. Functionally, forms oxaloacetate, a four-carbon dicarboxylic acid source for the tricarboxylic acid cycle. In Streptococcus agalactiae serotype Ia (strain ATCC 27591 / A909 / CDC SS700), this protein is Phosphoenolpyruvate carboxylase.